The sequence spans 261 residues: Phosphatidylglycerol--prolipoprotein diacylglyceryl transferase (261 aa).

The next 3 membrane-spanning stretches (helical) occupy residues 20–40 (LAIHWYAIFIVGGAALAVWLA), 54–74 (IIDFVLFAFPLGIVGARLYYV), and 88–108 (IIAIWDGGGAIYGSLIAGAIV). R139 contacts a 1,2-diacyl-sn-glycero-3-phospho-(1'-sn-glycerol). The next 2 membrane-spanning stretches (helical) occupy residues 175–195 (MPTFLFESIGTLSGFILVMVF) and 235–255 (ARVSQWLSVLLVILGIILFVY).

It belongs to the Lgt family.

The protein localises to the cell membrane. It catalyses the reaction L-cysteinyl-[prolipoprotein] + a 1,2-diacyl-sn-glycero-3-phospho-(1'-sn-glycerol) = an S-1,2-diacyl-sn-glyceryl-L-cysteinyl-[prolipoprotein] + sn-glycerol 1-phosphate + H(+). Its pathway is protein modification; lipoprotein biosynthesis (diacylglyceryl transfer). Its function is as follows. Catalyzes the transfer of the diacylglyceryl group from phosphatidylglycerol to the sulfhydryl group of the N-terminal cysteine of a prolipoprotein, the first step in the formation of mature lipoproteins. This chain is Phosphatidylglycerol--prolipoprotein diacylglyceryl transferase, found in Lactococcus lactis subsp. cremoris (strain MG1363).